The chain runs to 371 residues: Histidinol-phosphate aminotransferase (371 aa).

Lys-228 carries the post-translational modification N6-(pyridoxal phosphate)lysine.

The protein belongs to the class-II pyridoxal-phosphate-dependent aminotransferase family. Histidinol-phosphate aminotransferase subfamily. Pyridoxal 5'-phosphate serves as cofactor.

It carries out the reaction L-histidinol phosphate + 2-oxoglutarate = 3-(imidazol-4-yl)-2-oxopropyl phosphate + L-glutamate. Its pathway is amino-acid biosynthesis; L-histidine biosynthesis; L-histidine from 5-phospho-alpha-D-ribose 1-diphosphate: step 7/9. This chain is Histidinol-phosphate aminotransferase, found in Methanococcus maripaludis (strain C5 / ATCC BAA-1333).